Here is a 447-residue protein sequence, read N- to C-terminus: Glutamyl-tRNA reductase (447 aa).

Substrate-binding positions include Thr45 to Arg48, Ser111, Glu116 to Glu118, and Gln122. Catalysis depends on Cys46, which acts as the Nucleophile. Position 191–196 (Gly191–Ala196) interacts with NADP(+).

Belongs to the glutamyl-tRNA reductase family. Homodimer.

It carries out the reaction (S)-4-amino-5-oxopentanoate + tRNA(Glu) + NADP(+) = L-glutamyl-tRNA(Glu) + NADPH + H(+). Its pathway is porphyrin-containing compound metabolism; protoporphyrin-IX biosynthesis; 5-aminolevulinate from L-glutamyl-tRNA(Glu): step 1/2. Catalyzes the NADPH-dependent reduction of glutamyl-tRNA(Glu) to glutamate 1-semialdehyde (GSA). The sequence is that of Glutamyl-tRNA reductase from Tropheryma whipplei (strain Twist) (Whipple's bacillus).